The chain runs to 368 residues: MSKKTDTPDYKPSIYSLTRDELIAWAIEHGEKKFRASQIWDWLYKKRVQSFDEMTNISKDFIALLNENFVVNPLKQRIVQESADGTVKYLFELPDGMLIETVLMRQYYGLSVCVTTQVGCNIGCTFCASGLIKKQRDLNNGEITAQIMLVQKYFDERGQGERVSHIVVMGIGEPFDNYTNVLKFLRTVNDDNGLAIGARHITVSTSGLAHKIREFANEGVQVNLAVSLHAPNNELRSSIMRINRSFPLEKLFAAIEYYIETTNRRVTFEYIMLNGVNDTPENAQELADLTKKIRKLSYVNLIPYNPVSEHDQYSRSPKERVEAFYDVLKKNGVNCVVRQEHGTDIDAACGQLRSNTMKRDRQKAKVGR.

The Proton acceptor role is filled by glutamate 100. One can recognise a Radical SAM core domain in the interval 106 to 344 (QYYGLSVCVT…CVVRQEHGTD (239 aa)). Residues cysteine 113 and cysteine 349 are joined by a disulfide bond. Residues cysteine 120, cysteine 124, and cysteine 127 each contribute to the [4Fe-4S] cluster site. S-adenosyl-L-methionine contacts are provided by residues 172–173 (GE), serine 204, 227–229 (SLH), and asparagine 305. The active-site S-methylcysteine intermediate is cysteine 349.

This sequence belongs to the radical SAM superfamily. RlmN family. [4Fe-4S] cluster is required as a cofactor.

Its subcellular location is the cytoplasm. The enzyme catalyses adenosine(2503) in 23S rRNA + 2 reduced [2Fe-2S]-[ferredoxin] + 2 S-adenosyl-L-methionine = 2-methyladenosine(2503) in 23S rRNA + 5'-deoxyadenosine + L-methionine + 2 oxidized [2Fe-2S]-[ferredoxin] + S-adenosyl-L-homocysteine. The catalysed reaction is adenosine(37) in tRNA + 2 reduced [2Fe-2S]-[ferredoxin] + 2 S-adenosyl-L-methionine = 2-methyladenosine(37) in tRNA + 5'-deoxyadenosine + L-methionine + 2 oxidized [2Fe-2S]-[ferredoxin] + S-adenosyl-L-homocysteine. Its function is as follows. Specifically methylates position 2 of adenine 2503 in 23S rRNA and position 2 of adenine 37 in tRNAs. This Streptococcus agalactiae serotype III (strain NEM316) protein is Probable dual-specificity RNA methyltransferase RlmN.